The primary structure comprises 234 residues: UPF0441 protein plu3956 (234 aa).

2 disordered regions span residues 105–129 (QAGL…QQSG) and 149–234 (SAPS…SVGG). The span at 110–127 (TTTSSTSTNGEAQAQQQQ) shows a compositional bias: low complexity. Over residues 150–175 (APSQPLFSSKSATSPANGQFVDSTGK) the composition is skewed to polar residues. Composition is skewed to low complexity over residues 188 to 205 (TVPK…TTIT) and 216 to 234 (QSTM…SVGG).

The protein belongs to the UPF0441 family.

This is UPF0441 protein plu3956 from Photorhabdus laumondii subsp. laumondii (strain DSM 15139 / CIP 105565 / TT01) (Photorhabdus luminescens subsp. laumondii).